The chain runs to 443 residues: L-seryl-tRNA(Sec) selenium transferase (443 aa).

Lys-285 carries the post-translational modification N6-(pyridoxal phosphate)lysine.

The protein belongs to the SelA family. The cofactor is pyridoxal 5'-phosphate.

The protein localises to the cytoplasm. It catalyses the reaction L-seryl-tRNA(Sec) + selenophosphate + H(+) = L-selenocysteinyl-tRNA(Sec) + phosphate. It functions in the pathway aminoacyl-tRNA biosynthesis; selenocysteinyl-tRNA(Sec) biosynthesis; selenocysteinyl-tRNA(Sec) from L-seryl-tRNA(Sec) (bacterial route): step 1/1. Converts seryl-tRNA(Sec) to selenocysteinyl-tRNA(Sec) required for selenoprotein biosynthesis. The protein is L-seryl-tRNA(Sec) selenium transferase of Campylobacter lari (strain RM2100 / D67 / ATCC BAA-1060).